The sequence spans 159 residues: Putative 4-hydroxy-4-methyl-2-oxoglutarate aldolase (159 aa).

Residues 75–78 (GDQL) and arginine 97 each bind substrate. Aspartate 98 is a binding site for a divalent metal cation.

It belongs to the class II aldolase/RraA-like family. Homotrimer. The cofactor is a divalent metal cation.

The catalysed reaction is 4-hydroxy-4-methyl-2-oxoglutarate = 2 pyruvate. The enzyme catalyses oxaloacetate + H(+) = pyruvate + CO2. In terms of biological role, catalyzes the aldol cleavage of 4-hydroxy-4-methyl-2-oxoglutarate (HMG) into 2 molecules of pyruvate. Also contains a secondary oxaloacetate (OAA) decarboxylase activity due to the common pyruvate enolate transition state formed following C-C bond cleavage in the retro-aldol and decarboxylation reactions. The sequence is that of Putative 4-hydroxy-4-methyl-2-oxoglutarate aldolase from Laribacter hongkongensis (strain HLHK9).